The primary structure comprises 206 residues: Ras-related protein Rab-18 (206 aa).

Met1 is modified (N-acetylmethionine). Residues Ser17, Gly20, Lys21, Ser22, Ser23, Asp34, Pro35, Thr40, Gly66, Lys123, and Asp125 each contribute to the GTP site. Residue Ser22 participates in Mg(2+) binding. Short sequence motifs (switch) lie at residues 31 to 45 (DTFD…GVDF) and 63 to 80 (DTAG…YYRG). Mg(2+) is bound at residue Thr40. Ser144 bears the Phosphoserine mark. Ala152 is a binding site for GTP. The S-palmitoyl cysteine moiety is linked to residue Cys199. Cys203 carries the cysteine methyl ester modification. Residue Cys203 is the site of S-geranylgeranyl cysteine attachment. Positions 204-206 (SVL) are cleaved as a propeptide — removed in mature form.

The protein belongs to the small GTPase superfamily. Rab family. Interacts (in GTP-bound form) with ZFYVE1. Interacts with ZW10 and this interaction is enhanced in the presence of ZFYVE1. Interacts with BSCL2. As to quaternary structure, (Microbial infection) Interacts with Hepatitis C virus (HCV) non-structural protein 5A; this interaction may promote the association of NS5A and other viral replicase components with lipid droplets. It depends on Mg(2+) as a cofactor. As to expression, ubiquitous.

It is found in the endoplasmic reticulum membrane. Its subcellular location is the golgi apparatus. It localises to the cis-Golgi network membrane. The protein localises to the lipid droplet. The protein resides in the apical cell membrane. It catalyses the reaction GTP + H2O = GDP + phosphate + H(+). Regulated by guanine nucleotide exchange factor (GEF) RAB3GAP1-RAB3GAP2 complex at the cis-Golgi membrane which promotes the exchange of bound GDP for free GTP. Regulated by GTPase activating protein (GAP) TBC1D20 at the ER membrane which increases the GTP hydrolysis activity. Inhibited by GDP dissociation inhibitors (GDIs) which prevent Rab-GDP dissociation. In terms of biological role, the small GTPases Rab are key regulators of intracellular membrane trafficking, from the formation of transport vesicles to their fusion with membranes. Rabs cycle between an inactive GDP-bound form and an active GTP-bound form that is able to recruit to membranes different sets of downstream effectors directly responsible for vesicle formation, movement, tethering and fusion. RAB18 is required for the localization of ZFYVE1 to lipid droplets and for its function in mediating the formation of endoplasmic reticulum-lipid droplets (ER-LD) contacts. Also required for maintaining endoplasmic reticulum structure. Plays a role in apical endocytosis/recycling. Plays a key role in eye and brain development and neurodegeneration. The chain is Ras-related protein Rab-18 from Homo sapiens (Human).